The chain runs to 776 residues: Endonuclease MutS2 (776 aa).

Residue 330-337 participates in ATP binding; it reads GPNTGGKT. Positions 701–776 constitute a Smr domain; the sequence is LDLRGMRYEE…GSGATIAILK (76 aa).

It belongs to the DNA mismatch repair MutS family. MutS2 subfamily. As to quaternary structure, homodimer. Binds to stalled ribosomes, contacting rRNA.

Endonuclease that is involved in the suppression of homologous recombination and thus may have a key role in the control of bacterial genetic diversity. In terms of biological role, acts as a ribosome collision sensor, splitting the ribosome into its 2 subunits. Detects stalled/collided 70S ribosomes which it binds and splits by an ATP-hydrolysis driven conformational change. Acts upstream of the ribosome quality control system (RQC), a ribosome-associated complex that mediates the extraction of incompletely synthesized nascent chains from stalled ribosomes and their subsequent degradation. Probably generates substrates for RQC. In Lactococcus lactis subsp. cremoris (strain MG1363), this protein is Endonuclease MutS2.